The chain runs to 161 residues: Putative pre-16S rRNA nuclease (161 aa).

The protein belongs to the YqgF nuclease family.

The protein localises to the cytoplasm. Functionally, could be a nuclease involved in processing of the 5'-end of pre-16S rRNA. The protein is Putative pre-16S rRNA nuclease of Bradyrhizobium sp. (strain BTAi1 / ATCC BAA-1182).